A 155-amino-acid chain; its full sequence is MGLRAGSRCRADHLAQPQPQGHLAPVLRCGECWRARGLPGGCCLHTEGGCSLGAQAGWRTAGWEARGRRDLGLETTSAHSRSLLHLSSWRRPDVGEAAGAELLQRAPLQQPDPAQAAVEGGLLARLPRPQDQGCGQHRPHSPRLVDIALPGGGWT.

The disordered stretch occupies residues 130 to 155 (QDQGCGQHRPHSPRLVDIALPGGGWT).

This is Protein FAM201A (FAM201A) from Homo sapiens (Human).